Here is a 385-residue protein sequence, read N- to C-terminus: Sensor histidine kinase Hik2 (385 aa).

Residues 11–131 (ALCRTQLELV…QQVAQTLAIA (121 aa)) enclose the GAF domain. Residue cysteine 13 participates in [3Fe-4S] cluster binding. The segment at 142-270 (SHSPAQPLDQ…PQLPPIWLEE (129 aa)) is DHp domain, may sense NaCl. The region spanning 158 to 381 (DLLHQLRNPV…AFTLAIPWQM (224 aa)) is the Histidine kinase domain. Histidine 161 carries the phosphohistidine; by autocatalysis modification.

This sequence belongs to the chloroplast sensor kinase protein family. Hexamers; upon treatment with 0.5 M NaCl only tetramers are seen. The tetramers are probably inactive. The cofactor is [3Fe-4S] cluster. In terms of processing, autophosphorylates, possibly on His-161.

It carries out the reaction ATP + protein L-histidine = ADP + protein N-phospho-L-histidine.. Functionally, member of 2 two-component regulatory system(s) Hik2/Rre1 and Hik2/RppA. Transduces PQ (plastoquinone) redox signals to photosystem gene expression machinery during the adjustment of photosystem stoichiometry. Reduced PQ suppresses its autophosphorylation activity (i.e. kinase activity is higher under oxidizing conditions). As part of a two-component regulatory system with Rre1, controls expression of sigB and several other genes in response to hyperosmotic stress. May transfer phosphate to RppA in a possible Hik2/RppA two-component system. The sequence is that of Sensor histidine kinase Hik2 from Thermosynechococcus vestitus (strain NIES-2133 / IAM M-273 / BP-1).